The following is a 597-amino-acid chain: 2-succinyl-5-enolpyruvyl-6-hydroxy-3-cyclohexene-1-carboxylate synthase (597 aa).

Belongs to the TPP enzyme family. MenD subfamily. As to quaternary structure, homodimer. Mg(2+) is required as a cofactor. Mn(2+) serves as cofactor. The cofactor is thiamine diphosphate.

The enzyme catalyses isochorismate + 2-oxoglutarate + H(+) = 5-enolpyruvoyl-6-hydroxy-2-succinyl-cyclohex-3-ene-1-carboxylate + CO2. Its pathway is quinol/quinone metabolism; 1,4-dihydroxy-2-naphthoate biosynthesis; 1,4-dihydroxy-2-naphthoate from chorismate: step 2/7. It functions in the pathway cofactor biosynthesis; phylloquinone biosynthesis. Functionally, catalyzes the thiamine diphosphate-dependent decarboxylation of 2-oxoglutarate and the subsequent addition of the resulting succinic semialdehyde-thiamine pyrophosphate anion to isochorismate to yield 2-succinyl-5-enolpyruvyl-6-hydroxy-3-cyclohexene-1-carboxylate (SEPHCHC). In Synechococcus sp. (strain JA-3-3Ab) (Cyanobacteria bacterium Yellowstone A-Prime), this protein is 2-succinyl-5-enolpyruvyl-6-hydroxy-3-cyclohexene-1-carboxylate synthase.